Here is a 467-residue protein sequence, read N- to C-terminus: H(+)/Cl(-) exchange transporter ClcA (467 aa).

Over 1-30 the chain is Cytoplasmic; sequence MTKRERIVKSVLAHVPKDAINQFVSRGSTP. A helical transmembrane segment spans residues 31–67; that stretch reads FSVLIMAAIVGTLAGFVGTYFELAVHFVSETRTEWLR. The Periplasmic segment spans residues 68-74; the sequence is SEIGSVL. Residues 75–98 traverse the membrane as a helical segment; sequence PLWLAAVLISALLAFIGYFLVHRF. Positions 104–108 match the Selectivity filter part_1 motif; that stretch reads GSGIP. Ser-105 is a binding site for chloride. The helical intramembrane region spans 107–114; sequence IPEIEGAM. At 115-121 the chain is on the cytoplasmic side; it reads DNIRPVR. A run of 2 helical transmembrane segments spans residues 122 to 139 and 146 to 164; these read WWRV…ALGS and EGPT…TDIF. The short motif at 144–148 is the Selectivity filter part_2 element; it reads GREGP. Residues 165-174 lie on the Cytoplasmic side of the membrane; it reads RVKDDDTRHS. 2 consecutive intramembrane regions (helical) follow at residues 175–187 and 191–199; these read LLAS…LAAA and PLAGIMFVV. Residues 200 to 212 lie on the Cytoplasmic side of the membrane; that stretch reads EEMRPQFRYSLIS. A helical membrane pass occupies residues 213–230; that stretch reads IRAVIISAIMANIVFRAI. At 231–250 the chain is on the periplasmic side; sequence NGQDAVITMPQYQSPALQTL. Residues 251–279 form a helical membrane-spanning segment; that stretch reads WLFLLLGALFGVFGVIFNKLITVAQDSFV. Residues 280–285 are Cytoplasmic-facing; that stretch reads AIHKND. Residues 286 to 307 traverse the membrane as a helical segment; that stretch reads RKRYLITGSILGGVFGLLLLYV. Residues 308-327 are Periplasmic-facing; it reads PQLTGGGIALIPDVTTGNYS. The next 2 membrane-spanning stretches (helical) occupy residues 328 to 347 and 353 to 374; these read ISIL…LCFG and GIFA…ASAD. The Selectivity filter part_3 motif lies at 353 to 357; the sequence is GIFAP. Positions 354 and 355 each coordinate chloride. At 375–384 the chain is on the periplasmic side; the sequence is VLLPTLDIEP. The segment at residues 385–399 is an intramembrane region (helical); that stretch reads GVFAIAGMGALFAAT. Positions 400–402 form an intramembrane region, note=Loop between two helices; sequence VRA. Positions 403–414 form an intramembrane region, helical; the sequence is PITGILLVIEMT. An intramembrane region (note=Loop between two helices) is located at residues 415–419; it reads NNYYL. A helical transmembrane segment spans residues 420 to 436; that stretch reads ILPLIITCLGAVIVAQL. Over 437–467 the chain is Cytoplasmic; sequence LGGQPIYSQLLHRTLKNDKLRQQDLPENQAS. Tyr-443 contacts chloride.

Belongs to the chloride channel (TC 2.A.49) family. ClcA subfamily. Homodimer.

It localises to the cell inner membrane. The enzyme catalyses 2 chloride(in) + H(+)(out) = 2 chloride(out) + H(+)(in). In terms of biological role, proton-coupled chloride transporter. Functions as antiport system and exchanges two chloride ions for 1 proton. Probably acts as an electrical shunt for an outwardly-directed proton pump that is linked to amino acid decarboxylation, as part of the extreme acid resistance (XAR) response. The protein is H(+)/Cl(-) exchange transporter ClcA of Vibrio parahaemolyticus serotype O3:K6 (strain RIMD 2210633).